Here is a 922-residue protein sequence, read N- to C-terminus: Hexokinase-3 (922 aa).

The disordered stretch occupies residues 1 to 23 (MATIGPSGLHPGERASVCPHEGV). 2 consecutive Hexokinase domains span residues 25 to 469 (RPSG…MVTA) and 475 to 911 (AAHR…LVTA). Positions 82-218 (HGTEQGDFLV…TYRIDVVAMV (137 aa)) are hexokinase small subdomain 1. An ATP-binding site is contributed by 93-100 (ELGATGAS). 93–102 (ELGATGASLR) is a D-glucose 6-phosphate binding site. Residues S166, 183-184 (TK), and 219-220 (ND) contribute to the D-glucose site. Positions 219 to 458 (NDTVGTMMGC…CDVSFIPSVD (240 aa)) are hexokinase large subdomain 1. 2 residues coordinate D-glucose 6-phosphate: D220 and T243. Residues N246, E271, and 302–305 (QRFE) contribute to the D-glucose site. A D-glucose 6-phosphate-binding site is contributed by 424-426 (GGR). Residues 436–437 (RI) and 540–545 (DLGGTN) each bind ATP. Residues 529–660 (DGSERGDFLA…AVELNVVAIV (132 aa)) form a hexokinase small subdomain 2 region. 540-544 (DLGGT) provides a ligand contact to D-glucose 6-phosphate. D-glucose-binding positions include 608–609 (SF), 625–626 (TK), and 661–662 (ND). The hexokinase large subdomain 2 stretch occupies residues 661 to 900 (NDTVGTMMSC…CTVTFLQSED (240 aa)). D-glucose 6-phosphate is bound by residues D662 and T685. T685 contacts ATP. Residues 687–688 (TN), E713, and E747 contribute to the D-glucose site. ATP-binding positions include 752–753 (GM), 789–793 (TKFLS), and 868–872 (TLYKL). D-glucose 6-phosphate-binding positions include 866 to 868 (DGT) and S902.

The protein belongs to the hexokinase family.

It carries out the reaction a D-hexose + ATP = a D-hexose 6-phosphate + ADP + H(+). The catalysed reaction is D-fructose + ATP = D-fructose 6-phosphate + ADP + H(+). It catalyses the reaction D-glucose + ATP = D-glucose 6-phosphate + ADP + H(+). It participates in carbohydrate metabolism; hexose metabolism. Its pathway is carbohydrate degradation; glycolysis; D-glyceraldehyde 3-phosphate and glycerone phosphate from D-glucose: step 1/4. With respect to regulation, hexokinase is an allosteric enzyme inhibited by its product D-glucose 6-phosphate. Functionally, catalyzes the phosphorylation of hexose, such as D-glucose and D-fructose, to hexose 6-phosphate (D-glucose 6-phosphate and D-fructose 6-phosphate, respectively). Mediates the initial step of glycolysis by catalyzing phosphorylation of D-glucose to D-glucose 6-phosphate. In Mus musculus (Mouse), this protein is Hexokinase-3.